The primary structure comprises 1396 residues: Probable ATP-dependent RNA helicase spindle-E (1396 aa).

A disordered region spans residues 1 to 34 (MDEAAGPSTSRTSNLEDVDDEGASLAEEDEEHTK). Positions 16-30 (EDVDDEGASLAEEDE) are enriched in acidic residues. In terms of domain architecture, Helicase ATP-binding spans 68 to 234 (LDKIRSNAVV…FKIPKKSGYL (167 aa)). Residue 81–88 (GATGCGKT) participates in ATP binding. A DEAH box motif is present at residues 180-183 (DEVH). One can recognise a Helicase C-terminal domain in the interval 292-468 (KGQEFGDSLE…TVVLKAKLLE (177 aa)). Residues 885–950 (NFAMGQMVAA…RQLDDSLGQL (66 aa)) form the Tudor domain.

The protein belongs to the DEAD box helicase family. DEAH subfamily.

The protein resides in the cytoplasm. It carries out the reaction ATP + H2O = ADP + phosphate + H(+). In terms of biological role, probable ATP-binding RNA helicase which plays a central role during gametogenesis by repressing transposable elements and preventing their mobilization, which is essential for the germline integrity. Acts via the piRNA metabolic process, which mediates the repression of transposable elements during meiosis by forming complexes composed of piRNAs and Piwi proteins and govern the methylation and subsequent repression of transposons. The chain is Probable ATP-dependent RNA helicase spindle-E (spn-E) from Culex quinquefasciatus (Southern house mosquito).